We begin with the raw amino-acid sequence, 475 residues long: ATP synthase subunit beta, chloroplastic (475 aa).

156–163 lines the ATP pocket; sequence GGAGVGKT.

Belongs to the ATPase alpha/beta chains family. As to quaternary structure, F-type ATPases have 2 components, CF(1) - the catalytic core - and CF(0) - the membrane proton channel. CF(1) has five subunits: alpha(3), beta(3), gamma(1), delta(1), epsilon(1). CF(0) has four main subunits: a(1), b(1), b'(1) and c(9-12).

It localises to the plastid. Its subcellular location is the chloroplast thylakoid membrane. It catalyses the reaction ATP + H2O + 4 H(+)(in) = ADP + phosphate + 5 H(+)(out). Its function is as follows. Produces ATP from ADP in the presence of a proton gradient across the membrane. The catalytic sites are hosted primarily by the beta subunits. The sequence is that of ATP synthase subunit beta, chloroplastic from Phaeodactylum tricornutum (strain CCAP 1055/1).